A 363-amino-acid chain; its full sequence is Chalcone synthase B (363 aa).

Cys-170 is an active-site residue.

The protein belongs to the thiolase-like superfamily. Chalcone/stilbene synthases family.

It carries out the reaction (E)-4-coumaroyl-CoA + 3 malonyl-CoA + 3 H(+) = 2',4,4',6'-tetrahydroxychalcone + 3 CO2 + 4 CoA. It participates in secondary metabolite biosynthesis; flavonoid biosynthesis. Its function is as follows. The primary product of this enzyme is 4,2',4',6'-tetrahydroxychalcone (also termed naringenin-chalcone or chalcone) which can under specific conditions spontaneously isomerize into naringenin. In Ipomoea nil (Japanese morning glory), this protein is Chalcone synthase B (CHSB).